The primary structure comprises 128 residues: Small ribosomal subunit protein uS12 (128 aa).

Residues 1 to 30 (MPTINQLIRKGREPKERKSKSPALMGNPQK) form a disordered region. Asp89 carries the 3-methylthioaspartic acid modification. The interval 106-128 (GVEGRKQGRSKYGTKRPKEGGKK) is disordered.

It belongs to the universal ribosomal protein uS12 family. In terms of assembly, part of the 30S ribosomal subunit. Contacts proteins S8 and S17. May interact with IF1 in the 30S initiation complex.

Its function is as follows. With S4 and S5 plays an important role in translational accuracy. Interacts with and stabilizes bases of the 16S rRNA that are involved in tRNA selection in the A site and with the mRNA backbone. Located at the interface of the 30S and 50S subunits, it traverses the body of the 30S subunit contacting proteins on the other side and probably holding the rRNA structure together. The combined cluster of proteins S8, S12 and S17 appears to hold together the shoulder and platform of the 30S subunit. The sequence is that of Small ribosomal subunit protein uS12 from Dictyoglomus thermophilum (strain ATCC 35947 / DSM 3960 / H-6-12).